A 183-amino-acid chain; its full sequence is Dual-action ribosomal maturation protein DarP (183 aa).

Residues 1–27 (MSSHSQEPVGEENFDDSEYDRPSKSQV) are disordered. A compositionally biased stretch (acidic residues) spans 9–18 (VGEENFDDSE).

This sequence belongs to the DarP family.

It localises to the cytoplasm. Its function is as follows. Member of a network of 50S ribosomal subunit biogenesis factors which assembles along the 30S-50S interface, preventing incorrect 23S rRNA structures from forming. Promotes peptidyl transferase center (PTC) maturation. The polypeptide is Dual-action ribosomal maturation protein DarP (Bordetella parapertussis (strain 12822 / ATCC BAA-587 / NCTC 13253)).